The following is a 366-amino-acid chain: 3-dehydroquinate synthase (366 aa).

NAD(+)-binding positions include 75-80, 109-113, 133-134, lysine 146, lysine 155, and 173-176; these read DGEEYK, GVVGD, TT, and TLDT. Zn(2+) contacts are provided by glutamate 188, histidine 251, and histidine 268.

Belongs to the sugar phosphate cyclases superfamily. Dehydroquinate synthase family. It depends on Co(2+) as a cofactor. Requires Zn(2+) as cofactor. NAD(+) is required as a cofactor.

It is found in the cytoplasm. It carries out the reaction 7-phospho-2-dehydro-3-deoxy-D-arabino-heptonate = 3-dehydroquinate + phosphate. The protein operates within metabolic intermediate biosynthesis; chorismate biosynthesis; chorismate from D-erythrose 4-phosphate and phosphoenolpyruvate: step 2/7. In terms of biological role, catalyzes the conversion of 3-deoxy-D-arabino-heptulosonate 7-phosphate (DAHP) to dehydroquinate (DHQ). The chain is 3-dehydroquinate synthase from Nitrosospira multiformis (strain ATCC 25196 / NCIMB 11849 / C 71).